A 191-amino-acid chain; its full sequence is 3-isopropylmalate dehydratase small subunit (191 aa).

It belongs to the LeuD family. LeuD type 1 subfamily. In terms of assembly, heterodimer of LeuC and LeuD.

The enzyme catalyses (2R,3S)-3-isopropylmalate = (2S)-2-isopropylmalate. It participates in amino-acid biosynthesis; L-leucine biosynthesis; L-leucine from 3-methyl-2-oxobutanoate: step 2/4. Its function is as follows. Catalyzes the isomerization between 2-isopropylmalate and 3-isopropylmalate, via the formation of 2-isopropylmaleate. The sequence is that of 3-isopropylmalate dehydratase small subunit from Solibacter usitatus (strain Ellin6076).